The sequence spans 374 residues: uncharacterized protein (374 aa).

Low complexity predominate over residues 86 to 104 (RPAATAGTTPATGASGSAR). Residues 86–109 (RPAATAGTTPATGASGSARPTDAA) form a disordered region. Residues 179 to 354 (WWRRSNTTRG…LQRVVFAVHG (176 aa)) enclose the Macro domain.

This is an uncharacterized protein from Mycobacterium tuberculosis (strain CDC 1551 / Oshkosh).